Here is a 251-residue protein sequence, read N- to C-terminus: 2,3-bisphosphoglycerate-dependent phosphoglycerate mutase 2 (251 aa).

Residues Arg-8 to Asn-15, Thr-21 to Gly-22, Arg-60, Glu-87 to Tyr-90, Lys-98, Arg-114 to Arg-115, and Gly-183 to Asn-184 contribute to the substrate site. The active-site Tele-phosphohistidine intermediate is His-9. Glu-87 (proton donor/acceptor) is an active-site residue.

It belongs to the phosphoglycerate mutase family. BPG-dependent PGAM subfamily. As to quaternary structure, homodimer.

It catalyses the reaction (2R)-2-phosphoglycerate = (2R)-3-phosphoglycerate. The protein operates within carbohydrate degradation; glycolysis; pyruvate from D-glyceraldehyde 3-phosphate: step 3/5. Catalyzes the interconversion of 2-phosphoglycerate and 3-phosphoglycerate. In Nitrosospira multiformis (strain ATCC 25196 / NCIMB 11849 / C 71), this protein is 2,3-bisphosphoglycerate-dependent phosphoglycerate mutase 2.